A 130-amino-acid polypeptide reads, in one-letter code: Small ribosomal subunit protein uS9 (130 aa).

It belongs to the universal ribosomal protein uS9 family.

The polypeptide is Small ribosomal subunit protein uS9 (Shigella sonnei (strain Ss046)).